Reading from the N-terminus, the 171-residue chain is Protein GrpE (171 aa).

A disordered region spans residues 1–20; that stretch reads MNEEKEESPSTEAEGAGAEV.

The protein belongs to the GrpE family. In terms of assembly, homodimer.

The protein resides in the cytoplasm. Participates actively in the response to hyperosmotic and heat shock by preventing the aggregation of stress-denatured proteins, in association with DnaK and GrpE. It is the nucleotide exchange factor for DnaK and may function as a thermosensor. Unfolded proteins bind initially to DnaJ; upon interaction with the DnaJ-bound protein, DnaK hydrolyzes its bound ATP, resulting in the formation of a stable complex. GrpE releases ADP from DnaK; ATP binding to DnaK triggers the release of the substrate protein, thus completing the reaction cycle. Several rounds of ATP-dependent interactions between DnaJ, DnaK and GrpE are required for fully efficient folding. The chain is Protein GrpE from Acidithiobacillus ferrooxidans (strain ATCC 23270 / DSM 14882 / CIP 104768 / NCIMB 8455) (Ferrobacillus ferrooxidans (strain ATCC 23270)).